Reading from the N-terminus, the 364-residue chain is MAPLPISSIRVGKIDDVQELIKSKPNKVPERFIREEYERGVVVSSLKTHHLHHQIPVIDLSKLSKPDNDDFFFEILKLSQACEDWGFFQVINHGIEVEVVEDIEEVASEFFDMPLEEKKKYPMEPGTVQGYGQAFIFSEDQKLDWCNMFALGVHPPQIRNPKLWPSKPARFSESLEGYSKEIRELCKRLLKYIAISLGLKEERFEEMFGEAVQAVRMNYYPPCSSPDLVLGLSPHSDGSALTVLQQSKNSCVGLQILKDNTWVPVKPLPNALVINIGDTIEVLSNGKYKSVEHRAVTNREKERLTIVTFYAPNYEVEIEPMSELVDDETNPCKYRSYNHGDYSYHYVSNKLQGKKSLDFAKILN.

Positions 203 to 312 constitute a Fe2OG dioxygenase domain; that stretch reads RFEEMFGEAV…RLTIVTFYAP (110 aa). The Fe cation site is built by His235, Asp237, and His293. 2-oxoglutarate is bound at residue Arg303.

The protein belongs to the iron/ascorbate-dependent oxidoreductase family. In terms of assembly, monomer. Fe(2+) serves as cofactor. The cofactor is L-ascorbate. Expressed in the vasculature throughout the plant and in the buds and root tips.

The protein resides in the cytoplasm. It carries out the reaction (11R)-methyl carlactonoate + 2-oxoglutarate + O2 = (11R)-hydroxymethyl carlactonoate + succinate + CO2. In terms of biological role, oxoglutarate-dependent dioxygenase involved in the biosynthesis of strigolactone natural products, bioactive compounds promoting plant fitness and soil microbe interactions, but preventing shoot branching. Catalyzes the hydroxylation of (11R)-methyl carlactonoate (MeCLA) to produce (11R)-hydroxymethyl carlactonoate (1'-HO-MeCLA) in final stages of strigolactone biosynthesis, downstream of MAX1 and CLAMT. In Arabidopsis thaliana (Mouse-ear cress), this protein is Protein LATERAL BRANCHING OXIDOREDUCTASE 1.